A 364-amino-acid polypeptide reads, in one-letter code: Inactive protein RESTRICTED TEV MOVEMENT 2 (364 aa).

One can recognise a sHSP domain in the interval 14-121 (VQYEDFVPKS…LPETSRTEAA (108 aa)). The A-1 repeat unit spans residues 129 to 133 (LEEKR). The 6 X 5 AA repeats A of L-E-E-[SKR]-[ERK] stretch occupies residues 129 to 220 (LEEKRLLEES…LEERRLEERK (92 aa)). An A-2 repeat occupies 135–139 (LEESR). The stretch at 156-160 (LEEKE) is one A-3 repeat. One copy of the B-1 repeat lies at 163–176 (IRKLQEEAKAKEEA). The tract at residues 163-206 (IRKLQEEAKAKEEAEMRKLQEEAKAKEEAAAKKLQEEIEAKEKL) is 3 X 14 AA repeats B of [IMA]-[RK]-K-L-Q-E-E-A-K-A-K-E-[EK]-[LA]. Residues 178-191 (MRKLQEEAKAKEEA) form a B-2 repeat. Residues 193–205 (AKKLQEEIEAKEK) form a B-3 repeat. The A-4 repeat unit spans residues 206-210 (LEERK). An A-5 repeat occupies 211–215 (LEERR). One copy of the A-6 repeat lies at 216 to 220 (LEERK). Residues 322-342 (LMMNVGVAALVIFALGAYVSY) traverse the membrane as a helical segment. The disordered stretch occupies residues 345–364 (CSSSSSSSSPSSSSSSTKPE). Residues 346-364 (SSSSSSSSPSSSSSSTKPE) show a composition bias toward low complexity.

This sequence belongs to the small heat shock protein (HSP20) family.

Its subcellular location is the cell membrane. Its function is as follows. Seems to not be involved in heat resistance. Unable to mediate restriction of long-distance movement of the pathogenic tobacco etch virus (TEV) without causing a hypersensitive response or inducing systemic acquired resistance. This is Inactive protein RESTRICTED TEV MOVEMENT 2 (RTM2) from Arabidopsis thaliana (Mouse-ear cress).